Consider the following 92-residue polypeptide: Small ribosomal subunit protein uS19c (92 aa).

The protein belongs to the universal ribosomal protein uS19 family.

It is found in the plastid. It localises to the chloroplast. In terms of biological role, protein S19 forms a complex with S13 that binds strongly to the 16S ribosomal RNA. The protein is Small ribosomal subunit protein uS19c of Oedogonium cardiacum (Filamentous green alga).